The sequence spans 118 residues: Fluoride-specific ion channel FluC 1 (118 aa).

A run of 2 helical transmembrane segments spans residues 1–21 (MIQC…RGFV) and 29–49 (FNTS…FCIG). Residues Gly-71 and Thr-74 each contribute to the Na(+) site. Residues 95 to 115 (LFILYSILQYGVSFVACLLGY) form a helical membrane-spanning segment.

The protein belongs to the fluoride channel Fluc/FEX (TC 1.A.43) family.

The protein resides in the cell membrane. The enzyme catalyses fluoride(in) = fluoride(out). Na(+) is not transported, but it plays an essential structural role and its presence is essential for fluoride channel function. Fluoride-specific ion channel. Important for reducing fluoride concentration in the cell, thus reducing its toxicity. This is Fluoride-specific ion channel FluC 1 from Staphylococcus saprophyticus subsp. saprophyticus (strain ATCC 15305 / DSM 20229 / NCIMB 8711 / NCTC 7292 / S-41).